The following is a 202-amino-acid chain: ATP-dependent Clp protease proteolytic subunit (202 aa).

Ser101 (nucleophile) is an active-site residue. Residue His126 is part of the active site.

Belongs to the peptidase S14 family. As to quaternary structure, component of the chloroplastic Clp protease core complex.

Its subcellular location is the plastid. It localises to the chloroplast stroma. The catalysed reaction is Hydrolysis of proteins to small peptides in the presence of ATP and magnesium. alpha-casein is the usual test substrate. In the absence of ATP, only oligopeptides shorter than five residues are hydrolyzed (such as succinyl-Leu-Tyr-|-NHMec, and Leu-Tyr-Leu-|-Tyr-Trp, in which cleavage of the -Tyr-|-Leu- and -Tyr-|-Trp bonds also occurs).. Functionally, cleaves peptides in various proteins in a process that requires ATP hydrolysis. Has a chymotrypsin-like activity. Plays a major role in the degradation of misfolded proteins. The sequence is that of ATP-dependent Clp protease proteolytic subunit from Acorus calamus (Sweet flag).